An 890-amino-acid polypeptide reads, in one-letter code: Protein FAM171A1 (890 aa).

The N-terminal stretch at 1-21 (MSRSATLLLCLLGCHVWKAVT) is a signal peptide. The Extracellular portion of the chain corresponds to 22-303 (KTLREPGAGA…VTQDITTYHT (282 aa)). Asn-159, Asn-190, and Asn-194 each carry an N-linked (GlcNAc...) asparagine glycan. The helical transmembrane segment at 304 to 324 (VFLLAILGGMAFILLVLLCLL) threads the bilayer. Over 325 to 890 (LYYCRRKCLK…ERPLMAFNIK (566 aa)) the chain is Cytoplasmic. Phosphoserine occurs at positions 358, 360, 371, 422, 443, and 525. Disordered stretches follow at residues 730–759 (AGRN…RGDA) and 818–890 (EGSS…FNIK). Basic and acidic residues predominate over residues 747 to 757 (NEPKSARKGRG). The segment covering 822-833 (RRSGGQLPSLQE) has biased composition (polar residues). Ser-849 and Ser-855 each carry phosphoserine. Over residues 858–869 (EEEEDDDDDDQG) the composition is skewed to acidic residues. Positions 870 to 883 (EDKKSPWQKREERP) are enriched in basic and acidic residues.

It belongs to the FAM171 family. Interacts with ADAM10, NSG1 and OAZ1. In terms of tissue distribution, expressed in heart, brain, liver, skeletal muscle, kidney and pancreas. In brain, expressed by glia, pyramidal neurons and astrocytes (at protein level). Highly expressed in placental trophoblasts.

It localises to the cell membrane. In terms of biological role, involved in the regulation of the cytoskeletal dynamics, plays a role in actin stress fiber formation. This chain is Protein FAM171A1, found in Homo sapiens (Human).